Here is a 286-residue protein sequence, read N- to C-terminus: Bifunctional protein FolD (286 aa).

NADP(+)-binding positions include 165-167, serine 190, and valine 231; that span reads GRS.

Belongs to the tetrahydrofolate dehydrogenase/cyclohydrolase family. As to quaternary structure, homodimer.

The enzyme catalyses (6R)-5,10-methylene-5,6,7,8-tetrahydrofolate + NADP(+) = (6R)-5,10-methenyltetrahydrofolate + NADPH. It catalyses the reaction (6R)-5,10-methenyltetrahydrofolate + H2O = (6R)-10-formyltetrahydrofolate + H(+). It functions in the pathway one-carbon metabolism; tetrahydrofolate interconversion. Functionally, catalyzes the oxidation of 5,10-methylenetetrahydrofolate to 5,10-methenyltetrahydrofolate and then the hydrolysis of 5,10-methenyltetrahydrofolate to 10-formyltetrahydrofolate. In Bacillus thuringiensis (strain Al Hakam), this protein is Bifunctional protein FolD.